Here is a 348-residue protein sequence, read N- to C-terminus: tRNA N6-adenosine threonylcarbamoyltransferase (348 aa).

Fe cation contacts are provided by His-116 and His-120. Substrate-binding positions include 138–142 (IISGG), Asp-171, Gly-184, and Asn-282. Position 310 (Asp-310) interacts with Fe cation.

Belongs to the KAE1 / TsaD family. Fe(2+) is required as a cofactor.

The protein localises to the cytoplasm. The catalysed reaction is L-threonylcarbamoyladenylate + adenosine(37) in tRNA = N(6)-L-threonylcarbamoyladenosine(37) in tRNA + AMP + H(+). Required for the formation of a threonylcarbamoyl group on adenosine at position 37 (t(6)A37) in tRNAs that read codons beginning with adenine. Is involved in the transfer of the threonylcarbamoyl moiety of threonylcarbamoyl-AMP (TC-AMP) to the N6 group of A37, together with TsaE and TsaB. TsaD likely plays a direct catalytic role in this reaction. In Ehrlichia ruminantium (strain Gardel), this protein is tRNA N6-adenosine threonylcarbamoyltransferase.